Here is a 201-residue protein sequence, read N- to C-terminus: Probable nicotinate-nucleotide adenylyltransferase (201 aa).

The protein belongs to the NadD family.

It catalyses the reaction nicotinate beta-D-ribonucleotide + ATP + H(+) = deamido-NAD(+) + diphosphate. It functions in the pathway cofactor biosynthesis; NAD(+) biosynthesis; deamido-NAD(+) from nicotinate D-ribonucleotide: step 1/1. Its function is as follows. Catalyzes the reversible adenylation of nicotinate mononucleotide (NaMN) to nicotinic acid adenine dinucleotide (NaAD). This Clostridium botulinum (strain Loch Maree / Type A3) protein is Probable nicotinate-nucleotide adenylyltransferase.